Consider the following 185-residue polypeptide: Elongation factor P (185 aa).

The protein belongs to the elongation factor P family.

It localises to the cytoplasm. The protein operates within protein biosynthesis; polypeptide chain elongation. In terms of biological role, involved in peptide bond synthesis. Stimulates efficient translation and peptide-bond synthesis on native or reconstituted 70S ribosomes in vitro. Probably functions indirectly by altering the affinity of the ribosome for aminoacyl-tRNA, thus increasing their reactivity as acceptors for peptidyl transferase. The sequence is that of Elongation factor P from Azoarcus sp. (strain BH72).